The chain runs to 508 residues: Photosystem II CP47 reaction center protein (508 aa).

Transmembrane regions (helical) follow at residues 21–36 (SVHIMHTALVSGWAGS), 101–115 (IVFSGLCFLAAIWHW), 140–156 (GIHLFLSGVACFGFGAF), 203–218 (IAAGTLGILAGLFHLS), 237–252 (VLSSSIAAVFFAAFVV), and 457–472 (SFALLFFFGHIWHGAR).

This sequence belongs to the PsbB/PsbC family. PsbB subfamily. PSII is composed of 1 copy each of membrane proteins PsbA, PsbB, PsbC, PsbD, PsbE, PsbF, PsbH, PsbI, PsbJ, PsbK, PsbL, PsbM, PsbT, PsbX, PsbY, PsbZ, Psb30/Ycf12, at least 3 peripheral proteins of the oxygen-evolving complex and a large number of cofactors. It forms dimeric complexes. It depends on Binds multiple chlorophylls. PSII binds additional chlorophylls, carotenoids and specific lipids. as a cofactor.

It localises to the plastid. The protein resides in the chloroplast thylakoid membrane. Functionally, one of the components of the core complex of photosystem II (PSII). It binds chlorophyll and helps catalyze the primary light-induced photochemical processes of PSII. PSII is a light-driven water:plastoquinone oxidoreductase, using light energy to abstract electrons from H(2)O, generating O(2) and a proton gradient subsequently used for ATP formation. In Illicium oligandrum (Star anise), this protein is Photosystem II CP47 reaction center protein.